Consider the following 95-residue polypeptide: Blastocyst protein 4 (95 aa).

A signal peptide spans 1–20; that stretch reads MGAVFAIIGGFALDSPILRL.

In Oryctolagus cuniculus (Rabbit), this protein is Blastocyst protein 4.